The sequence spans 412 residues: Proteasome-activating nucleotidase 2 (412 aa).

Residues 28 to 74 (LRQHFERMVDVNRELDQRLQNADDRHAELVDEVDQMKARNEALKTAS) are a coiled coil. ATP-binding positions include 196 to 201 (GTGKTM) and His335. Residues 409-412 (DYQY) are docks into pockets in the proteasome alpha-ring to cause gate opening.

The protein belongs to the AAA ATPase family. In terms of assembly, homohexamer. The hexameric complex has a two-ring architecture resembling a top hat that caps the 20S proteasome core at one or both ends. Upon ATP-binding, the C-terminus of PAN interacts with the alpha-rings of the proteasome core by binding to the intersubunit pockets.

Its subcellular location is the cytoplasm. Functionally, ATPase which is responsible for recognizing, binding, unfolding and translocation of substrate proteins into the archaeal 20S proteasome core particle. Is essential for opening the gate of the 20S proteasome via an interaction with its C-terminus, thereby allowing substrate entry and access to the site of proteolysis. Thus, the C-termini of the proteasomal ATPase function like a 'key in a lock' to induce gate opening and therefore regulate proteolysis. Unfolding activity requires energy from ATP hydrolysis, whereas ATP binding alone promotes ATPase-20S proteasome association which triggers gate opening, and supports translocation of unfolded substrates. The sequence is that of Proteasome-activating nucleotidase 2 from Haloferax volcanii (strain ATCC 29605 / DSM 3757 / JCM 8879 / NBRC 14742 / NCIMB 2012 / VKM B-1768 / DS2) (Halobacterium volcanii).